The following is a 327-amino-acid chain: Thioredoxin reductase (327 aa).

FAD-binding positions include 10 to 13, 39 to 40, Q44, N53, V86, C143, D286, and 293 to 295; these read SGPA, IA, and RQA. C140 and C143 are disulfide-bonded.

Belongs to the class-II pyridine nucleotide-disulfide oxidoreductase family. Homodimer. It depends on FAD as a cofactor.

Its subcellular location is the cytoplasm. The catalysed reaction is [thioredoxin]-dithiol + NADP(+) = [thioredoxin]-disulfide + NADPH + H(+). Its function is as follows. Component of the thioredoxin-thioredoxin reductase system which may be involved in biosynthesis of penicillins and cephalosporins and may be important in determining the thiol-disulfide redox balance. The protein is Thioredoxin reductase (TRR1) of Pneumocystis jirovecii (Human pneumocystis pneumonia agent).